The sequence spans 239 residues: tRNA (guanine-N(7)-)-methyltransferase (239 aa).

The S-adenosyl-L-methionine site is built by Glu-69, Glu-94, Asp-121, and Asp-144. Asp-144 is a catalytic residue. Residue Lys-148 coordinates substrate. The segment at 150–155 (RHNKRR) is interaction with RNA. Substrate-binding positions include Asp-180 and 217–220 (TKFE).

It belongs to the class I-like SAM-binding methyltransferase superfamily. TrmB family. Monomer.

It catalyses the reaction guanosine(46) in tRNA + S-adenosyl-L-methionine = N(7)-methylguanosine(46) in tRNA + S-adenosyl-L-homocysteine. The protein operates within tRNA modification; N(7)-methylguanine-tRNA biosynthesis. Its function is as follows. Catalyzes the formation of N(7)-methylguanine at position 46 (m7G46) in tRNA. The polypeptide is tRNA (guanine-N(7)-)-methyltransferase (Pectobacterium atrosepticum (strain SCRI 1043 / ATCC BAA-672) (Erwinia carotovora subsp. atroseptica)).